The following is a 254-amino-acid chain: Matrix protein (254 aa).

This sequence belongs to the paramyxoviruses M protein family. As to quaternary structure, interacts with glycoprotein G (via N-terminus), and protein N. Interacts with protein M2-1; this interaction mediates the association between proteins M and N.

It is found in the virion. Its subcellular location is the host cytoplasm. It localises to the host nucleus. The protein resides in the host cell membrane. Functionally, has a crucial role in virus assembly and budding. The matrix interacts with the RNP complex and this association serves two functions: facilitate virion assembly and inhibit the viral transcriptase activity. Early in infection, M is localized to the nucleus and may inhibit host cell transcription. Later on, M can associate with lipid rafts supposely by interacting with the cytoskeleton and with the cytoplasmic tail of glycoprotein G. The binding of M to host membrane is stabilized by the surface expression of the viral glycoproteins. These interactions may allow virus formation by mediating association of the nucleocapsid with the nascent envelope. In Avian metapneumovirus (isolate Canada goose/Minnesota/15a/2001) (AMPV), this protein is Matrix protein (M).